The primary structure comprises 365 residues: Aminomethyltransferase (365 aa).

This sequence belongs to the GcvT family. In terms of assembly, the glycine cleavage system is composed of four proteins: P, T, L and H.

It catalyses the reaction N(6)-[(R)-S(8)-aminomethyldihydrolipoyl]-L-lysyl-[protein] + (6S)-5,6,7,8-tetrahydrofolate = N(6)-[(R)-dihydrolipoyl]-L-lysyl-[protein] + (6R)-5,10-methylene-5,6,7,8-tetrahydrofolate + NH4(+). The glycine cleavage system catalyzes the degradation of glycine. This chain is Aminomethyltransferase, found in Chlorobium phaeobacteroides (strain DSM 266 / SMG 266 / 2430).